The following is an 85-amino-acid chain: Large ribosomal subunit protein bL27 (85 aa).

Residues 1–22 (MAHKKAAGSTRNGRDSESKRLG) form a disordered region.

This sequence belongs to the bacterial ribosomal protein bL27 family.

The protein is Large ribosomal subunit protein bL27 of Pseudoalteromonas translucida (strain TAC 125).